The primary structure comprises 371 residues: Surface protein P12p (371 aa).

Residues 1–20 (MHIVSFIIFFFALFFPISIC) form the signal peptide. 6-Cys domains lie at 23–168 (INGV…LKKN) and 169–343 (ILYG…FSNQ). Cystine bridges form between cysteine 27-cysteine 62, cysteine 76-cysteine 144, cysteine 93-cysteine 142, and cysteine 173-cysteine 245. Asparagine 184 is a glycosylation site (N-linked (GlcNAc...) asparagine). The interval 202–239 (GNNNNDDDNNDDDNNNDNNNNDNNNNNNNNNNNNNNNN) is disordered. The segment covering 206–216 (NDDDNNDDDNN) has biased composition (acidic residues). Low complexity predominate over residues 217–239 (NDNNNNDNNNNNNNNNNNNNNNN). N-linked (GlcNAc...) asparagine glycosylation is found at asparagine 242 and asparagine 246. 2 disulfides stabilise this stretch: cysteine 260-cysteine 323 and cysteine 271-cysteine 321.

It is found in the cell surface. The protein resides in the cell membrane. In Plasmodium falciparum (isolate 3D7), this protein is Surface protein P12p (PFS12P).